The chain runs to 105 residues: Putative membrane protein insertion efficiency factor (105 aa).

The tract at residues 76–105 is disordered; it reads GHPGGVDPVPPGPHETPRKTSTHDDEPPSR. Residues 90-105 are compositionally biased toward basic and acidic residues; that stretch reads ETPRKTSTHDDEPPSR.

It belongs to the UPF0161 family.

It is found in the cell inner membrane. Its function is as follows. Could be involved in insertion of integral membrane proteins into the membrane. In Chromohalobacter salexigens (strain ATCC BAA-138 / DSM 3043 / CIP 106854 / NCIMB 13768 / 1H11), this protein is Putative membrane protein insertion efficiency factor.